We begin with the raw amino-acid sequence, 123 residues long: Large ribosomal subunit protein bL12 (123 aa).

It belongs to the bacterial ribosomal protein bL12 family. Homodimer. Part of the ribosomal stalk of the 50S ribosomal subunit. Forms a multimeric L10(L12)X complex, where L10 forms an elongated spine to which 2 to 4 L12 dimers bind in a sequential fashion. Binds GTP-bound translation factors.

Forms part of the ribosomal stalk which helps the ribosome interact with GTP-bound translation factors. Is thus essential for accurate translation. The polypeptide is Large ribosomal subunit protein bL12 (Rhodopseudomonas palustris (strain BisB18)).